Here is a 393-residue protein sequence, read N- to C-terminus: UDP-galactose translocator (393 aa).

The next 10 helical transmembrane spans lie at 3 to 23, 37 to 57, 65 to 85, 97 to 117, 140 to 160, 169 to 189, 200 to 220, 238 to 258, 269 to 289, and 315 to 335; these read AVGSGGSTATAGPGAVSAGAL, YISLAVLVVQNASLILSIRYA, FFATTAVVMAEVLKGLTCLLL, LVLFLHEAVLVQYMDTLKLAV, TFQVTYQLKILTTALFSVLML, WASLLLLFTGVAIVQAQQAGG, GVGLAAVVASCLSSGFAGVYF, LGLFGTALGLVGLWWAEGTAV, PAVWGVVLNQAFGGLLVAVVV, and LFGFHVDPLFALGAGLVIGAV. Residues 353 to 393 form a disordered region; it reads APTSGPCTHQQPPGQPPPPQLSSHHGDLSTEPFLPKSVLVK.

The protein belongs to the nucleotide-sugar transporter family. SLC35A subfamily. In terms of assembly, interacts with SLC35A3; the interaction is reduced in the presence of SLC35A4. Found in a complex with SLC35A3 and SLC35A4.

The protein localises to the golgi apparatus membrane. The enzyme catalyses UMP(out) + UDP-alpha-D-galactose(in) = UMP(in) + UDP-alpha-D-galactose(out). It catalyses the reaction UDP-N-acetyl-alpha-D-galactosamine(in) + UMP(out) = UDP-N-acetyl-alpha-D-galactosamine(out) + UMP(in). The catalysed reaction is UMP(out) + UDP-alpha-D-glucose(in) = UMP(in) + UDP-alpha-D-glucose(out). It carries out the reaction UMP(out) + UDP-N-acetyl-alpha-D-glucosamine(in) = UMP(in) + UDP-N-acetyl-alpha-D-glucosamine(out). The enzyme catalyses UDP-alpha-D-galactose(in) + AMP(out) = UDP-alpha-D-galactose(out) + AMP(in). It catalyses the reaction UDP-alpha-D-galactose(in) + CMP(out) = UDP-alpha-D-galactose(out) + CMP(in). The catalysed reaction is UDP-N-acetyl-alpha-D-galactosamine(out) + UDP-alpha-D-galactose(in) = UDP-N-acetyl-alpha-D-galactosamine(in) + UDP-alpha-D-galactose(out). It carries out the reaction UDP-N-acetyl-alpha-D-glucosamine(out) + UDP-alpha-D-galactose(in) = UDP-N-acetyl-alpha-D-glucosamine(in) + UDP-alpha-D-galactose(out). The enzyme catalyses UDP-alpha-D-galactose(in) + UDP-alpha-D-glucose(out) = UDP-alpha-D-galactose(out) + UDP-alpha-D-glucose(in). It catalyses the reaction UMP(out) + CMP(in) = UMP(in) + CMP(out). The catalysed reaction is UMP(out) + AMP(in) = UMP(in) + AMP(out). Functionally, transports uridine diphosphate galactose (UDP-galactose) from the cytosol into the Golgi apparatus, functioning as an antiporter that exchanges UDP-galactose for UMP. It is also able to exchange UDP-galactose for AMP and CMP, and to transport UDP-N-acetylgalactosamine (UDP-GalNAc) and other nucleotide sugars. As a provider of UDP-galactose to galactosyltransferases present in the Golgi apparatus, it is necessary for globotriaosylceramide/globoside (Gb3Cer) synthesis from lactosylceramide. The chain is UDP-galactose translocator from Bos taurus (Bovine).